A 618-amino-acid polypeptide reads, in one-letter code: DNA mismatch repair protein MutL (618 aa).

Residues 348–359 show a composition bias toward polar residues; that stretch reads QTDTARSPTGNF. The segment at 348–400 is disordered; that stretch reads QTDTARSPTGNFESGEVFDYPKSQLQPSHSVSSGGASLGSRSAGGSGGAYRAT. Positions 377 to 388 are enriched in low complexity; the sequence is SVSSGGASLGSR.

The protein belongs to the DNA mismatch repair MutL/HexB family.

In terms of biological role, this protein is involved in the repair of mismatches in DNA. It is required for dam-dependent methyl-directed DNA mismatch repair. May act as a 'molecular matchmaker', a protein that promotes the formation of a stable complex between two or more DNA-binding proteins in an ATP-dependent manner without itself being part of a final effector complex. This Pseudoalteromonas translucida (strain TAC 125) protein is DNA mismatch repair protein MutL.